A 397-amino-acid chain; its full sequence is Phosphoglycerate kinase (397 aa).

Substrate is bound by residues 21–23 (DVN), arginine 36, 59–62 (HFGR), arginine 119, and arginine 152. Residues lysine 202, glutamate 324, and 354 to 357 (GGDT) contribute to the ATP site.

Belongs to the phosphoglycerate kinase family. In terms of assembly, monomer.

It is found in the cytoplasm. It catalyses the reaction (2R)-3-phosphoglycerate + ATP = (2R)-3-phospho-glyceroyl phosphate + ADP. The protein operates within carbohydrate degradation; glycolysis; pyruvate from D-glyceraldehyde 3-phosphate: step 2/5. The polypeptide is Phosphoglycerate kinase (Cereibacter sphaeroides (strain KD131 / KCTC 12085) (Rhodobacter sphaeroides)).